The primary structure comprises 197 residues: Sec-independent protein translocase protein TatB (197 aa).

The helical transmembrane segment at 1–21 (MFDIGFGELLLVMVLGLIVLG) threads the bilayer. The interval 93–197 (KRGYTETPSP…ASARQPSDSR (105 aa)) is disordered. 2 stretches are compositionally biased toward basic and acidic residues: residues 104–113 (KSDDPKKSGD) and 160–169 (NHNDGRHATS). Residues 180 to 197 (PEQSQPSAASARQPSDSR) show a composition bias toward low complexity.

This sequence belongs to the TatB family. The Tat system comprises two distinct complexes: a TatABC complex, containing multiple copies of TatA, TatB and TatC subunits, and a separate TatA complex, containing only TatA subunits. Substrates initially bind to the TatABC complex, which probably triggers association of the separate TatA complex to form the active translocon.

The protein resides in the cell inner membrane. In terms of biological role, part of the twin-arginine translocation (Tat) system that transports large folded proteins containing a characteristic twin-arginine motif in their signal peptide across membranes. Together with TatC, TatB is part of a receptor directly interacting with Tat signal peptides. TatB may form an oligomeric binding site that transiently accommodates folded Tat precursor proteins before their translocation. In Pectobacterium atrosepticum (strain SCRI 1043 / ATCC BAA-672) (Erwinia carotovora subsp. atroseptica), this protein is Sec-independent protein translocase protein TatB.